A 63-amino-acid polypeptide reads, in one-letter code: Large ribosomal subunit protein uL29 (63 aa).

The protein belongs to the universal ribosomal protein uL29 family.

The chain is Large ribosomal subunit protein uL29 from Enterobacter sp. (strain 638).